The sequence spans 80 residues: MAVKKPENLSFEAAIEELDSVVNQLESGDLPLEDALKKFERGISLARAGQEKLTQAEQRVEILLQADDNAELTPFDGQDD.

It belongs to the XseB family. In terms of assembly, heterooligomer composed of large and small subunits.

Its subcellular location is the cytoplasm. It carries out the reaction Exonucleolytic cleavage in either 5'- to 3'- or 3'- to 5'-direction to yield nucleoside 5'-phosphates.. Its function is as follows. Bidirectionally degrades single-stranded DNA into large acid-insoluble oligonucleotides, which are then degraded further into small acid-soluble oligonucleotides. The polypeptide is Exodeoxyribonuclease 7 small subunit (Aliivibrio fischeri (strain ATCC 700601 / ES114) (Vibrio fischeri)).